A 128-amino-acid polypeptide reads, in one-letter code: QQSKPEELLKLRQGLMQTLKSQWAPIAGFAAGKADLPADAAQRAENMVLVAKLAPIGWAKGTEALPNSETKAEAFGAKSAQFMEGWKAMAAESTKLAAAAKAGPDALKAQAAATGKVCKACHEEFKQD.

Heme c is bound by residues Q13, Q17, E69, T70, C118, C121, and H122.

Post-translationally, binds 1 heme c group covalently per subunit.

In terms of biological role, cytochrome c' is the most widely occurring bacterial c-type cytochrome. Cytochromes c' are high-spin proteins and the heme has no sixth ligand. Their exact function is not known. The sequence is that of Cytochrome c' from Magnetospirillum fulvum (Rhodospirillum fulvum).